Reading from the N-terminus, the 235-residue chain is Purine nucleoside phosphorylase DeoD-type (235 aa).

His-4 lines the a purine D-ribonucleoside pocket. Residues Gly-20, Arg-24, Arg-43, and 87–90 (RVGT) contribute to the phosphate site. A purine D-ribonucleoside contacts are provided by residues Glu-162, 179-181 (EME), and 203-204 (SD). Asp-204 serves as the catalytic Proton donor.

The protein belongs to the PNP/UDP phosphorylase family. In terms of assembly, homohexamer; trimer of homodimers.

The catalysed reaction is a purine D-ribonucleoside + phosphate = a purine nucleobase + alpha-D-ribose 1-phosphate. The enzyme catalyses a purine 2'-deoxy-D-ribonucleoside + phosphate = a purine nucleobase + 2-deoxy-alpha-D-ribose 1-phosphate. In terms of biological role, catalyzes the reversible phosphorolytic breakdown of the N-glycosidic bond in the beta-(deoxy)ribonucleoside molecules, with the formation of the corresponding free purine bases and pentose-1-phosphate. The chain is Purine nucleoside phosphorylase DeoD-type from Bacillus cereus (strain ZK / E33L).